We begin with the raw amino-acid sequence, 441 residues long: Ribosomal protein uS12 methylthiotransferase RimO (441 aa).

An MTTase N-terminal domain is found at 8–118 (PKIGFVSLGC…VLEHVHHYVP (111 aa)). Residues cysteine 17, cysteine 53, cysteine 82, cysteine 150, cysteine 154, and cysteine 157 each coordinate [4Fe-4S] cluster. One can recognise a Radical SAM core domain in the interval 136 to 373 (LTPRHYAYLK…MQLQQQISAE (238 aa)). The TRAM domain maps to 376 to 441 (QEKVGREILV…DEYDLWGSRV (66 aa)).

The protein belongs to the methylthiotransferase family. RimO subfamily. [4Fe-4S] cluster serves as cofactor.

The protein resides in the cytoplasm. The catalysed reaction is L-aspartate(89)-[ribosomal protein uS12]-hydrogen + (sulfur carrier)-SH + AH2 + 2 S-adenosyl-L-methionine = 3-methylsulfanyl-L-aspartate(89)-[ribosomal protein uS12]-hydrogen + (sulfur carrier)-H + 5'-deoxyadenosine + L-methionine + A + S-adenosyl-L-homocysteine + 2 H(+). In terms of biological role, catalyzes the methylthiolation of an aspartic acid residue of ribosomal protein uS12. The chain is Ribosomal protein uS12 methylthiotransferase RimO from Citrobacter koseri (strain ATCC BAA-895 / CDC 4225-83 / SGSC4696).